A 499-amino-acid chain; its full sequence is Glycerol kinase (499 aa).

Position 12 (Thr-12) interacts with ADP. Thr-12, Thr-13, and Ser-14 together coordinate ATP. Thr-12 provides a ligand contact to sn-glycerol 3-phosphate. An ADP-binding site is contributed by Arg-16. Residues Arg-82, Glu-83, Tyr-134, and Asp-240 each contribute to the sn-glycerol 3-phosphate site. The glycerol site is built by Arg-82, Glu-83, Tyr-134, Asp-240, and Gln-241. ADP is bound by residues Thr-262 and Gly-306. ATP contacts are provided by Thr-262, Gly-306, Gln-310, and Gly-412. ADP-binding residues include Gly-412 and Asn-416.

This sequence belongs to the FGGY kinase family.

It catalyses the reaction glycerol + ATP = sn-glycerol 3-phosphate + ADP + H(+). Its pathway is polyol metabolism; glycerol degradation via glycerol kinase pathway; sn-glycerol 3-phosphate from glycerol: step 1/1. Inhibited by fructose 1,6-bisphosphate (FBP). In terms of biological role, key enzyme in the regulation of glycerol uptake and metabolism. Catalyzes the phosphorylation of glycerol to yield sn-glycerol 3-phosphate. In Nocardia farcinica (strain IFM 10152), this protein is Glycerol kinase.